Reading from the N-terminus, the 229-residue chain is Leucyl/phenylalanyl-tRNA--protein transferase (229 aa).

It belongs to the L/F-transferase family.

It is found in the cytoplasm. The catalysed reaction is N-terminal L-lysyl-[protein] + L-leucyl-tRNA(Leu) = N-terminal L-leucyl-L-lysyl-[protein] + tRNA(Leu) + H(+). It catalyses the reaction N-terminal L-arginyl-[protein] + L-leucyl-tRNA(Leu) = N-terminal L-leucyl-L-arginyl-[protein] + tRNA(Leu) + H(+). It carries out the reaction L-phenylalanyl-tRNA(Phe) + an N-terminal L-alpha-aminoacyl-[protein] = an N-terminal L-phenylalanyl-L-alpha-aminoacyl-[protein] + tRNA(Phe). In terms of biological role, functions in the N-end rule pathway of protein degradation where it conjugates Leu, Phe and, less efficiently, Met from aminoacyl-tRNAs to the N-termini of proteins containing an N-terminal arginine or lysine. The sequence is that of Leucyl/phenylalanyl-tRNA--protein transferase from Desulforapulum autotrophicum (strain ATCC 43914 / DSM 3382 / VKM B-1955 / HRM2) (Desulfobacterium autotrophicum).